The chain runs to 573 residues: Probable zinc metallopeptidase EGY3, chloroplastic (573 aa).

Residues 1–50 constitute a chloroplast transit peptide; the sequence is MASLFVSTPSSSLTLKSCHSLHLRRFDRAEFSNFGKASVNQTTRSRHSLR. Positions 38–105 are disordered; it reads SVNQTTRSRH…EKKSKQQEMD (68 aa). Composition is skewed to basic and acidic residues over residues 52–62 and 96–105; these read SAEDDRVREPV and EKKSKQQEMD. Residues 122–185 are a coiled coil; the sequence is EAAIKLEKTR…KALDLNKLKS (64 aa). 7 helical membrane-spanning segments follow: residues 274 to 294, 305 to 325, 376 to 396, 414 to 434, 441 to 461, 493 to 513, and 536 to 556; these read VSAIALCVTTFGTIALMSGFF, IANVVPLFGGFLSILGVSEIA, ASAYLTSLLLAAAAFISDGSF, PLLSFVQFVVGPYADDLGNVL, VGVPVDPLAFAGLLGMVVTSL, LLLGIGGLSGSVLCLAWGLFA, and FAWGIVLGLICFLTLFPNSGG.

It belongs to the peptidase M50B family.

It is found in the plastid. Its subcellular location is the chloroplast membrane. Probable membrane-associated metalloprotease that may be involved in chloroplast development. The sequence is that of Probable zinc metallopeptidase EGY3, chloroplastic (EGY3) from Arabidopsis thaliana (Mouse-ear cress).